Consider the following 181-residue polypeptide: 6,7-dimethyl-8-ribityllumazine synthase (181 aa).

Residues Tyr27, 58-60 (ALE), and 87-89 (CVI) each bind 5-amino-6-(D-ribitylamino)uracil. 92 to 93 (ET) contributes to the (2S)-2-hydroxy-3-oxobutyl phosphate binding site. The active-site Proton donor is the His95. Residue Asn120 coordinates 5-amino-6-(D-ribitylamino)uracil. Arg134 contributes to the (2S)-2-hydroxy-3-oxobutyl phosphate binding site.

The protein belongs to the DMRL synthase family.

The catalysed reaction is (2S)-2-hydroxy-3-oxobutyl phosphate + 5-amino-6-(D-ribitylamino)uracil = 6,7-dimethyl-8-(1-D-ribityl)lumazine + phosphate + 2 H2O + H(+). It participates in cofactor biosynthesis; riboflavin biosynthesis; riboflavin from 2-hydroxy-3-oxobutyl phosphate and 5-amino-6-(D-ribitylamino)uracil: step 1/2. In terms of biological role, catalyzes the formation of 6,7-dimethyl-8-ribityllumazine by condensation of 5-amino-6-(D-ribitylamino)uracil with 3,4-dihydroxy-2-butanone 4-phosphate. This is the penultimate step in the biosynthesis of riboflavin. In Methylobacterium nodulans (strain LMG 21967 / CNCM I-2342 / ORS 2060), this protein is 6,7-dimethyl-8-ribityllumazine synthase.